Reading from the N-terminus, the 404-residue chain is Tryptophan synthase beta chain (404 aa).

The residue at position 98 (K98) is an N6-(pyridoxal phosphate)lysine.

Belongs to the TrpB family. In terms of assembly, tetramer of two alpha and two beta chains. Pyridoxal 5'-phosphate serves as cofactor.

The enzyme catalyses (1S,2R)-1-C-(indol-3-yl)glycerol 3-phosphate + L-serine = D-glyceraldehyde 3-phosphate + L-tryptophan + H2O. Its pathway is amino-acid biosynthesis; L-tryptophan biosynthesis; L-tryptophan from chorismate: step 5/5. The beta subunit is responsible for the synthesis of L-tryptophan from indole and L-serine. The sequence is that of Tryptophan synthase beta chain from Rhodopseudomonas palustris (strain HaA2).